Here is a 152-residue protein sequence, read N- to C-terminus: UPF0719 transmembrane protein MT2674.1 (152 aa).

The next 4 helical transmembrane spans lie at 21-41 (VATV…FLMV), 62-82 (VVLA…AIYA), 92-112 (IGVA…LVIL), and 131-151 (PAVF…AAAL).

The protein belongs to the UPF0719 family.

The protein localises to the cell membrane. The polypeptide is UPF0719 transmembrane protein MT2674.1 (Mycobacterium tuberculosis (strain CDC 1551 / Oshkosh)).